The chain runs to 385 residues: Protein pelota homolog (385 aa).

This sequence belongs to the eukaryotic release factor 1 family. Pelota subfamily. As to quaternary structure, component of the Pelota-HBS1L complex, also named Dom34-Hbs1 complex, composed of PELO and HBS1L. It depends on a divalent metal cation as a cofactor.

Its subcellular location is the cytoplasm. In terms of biological role, component of the Pelota-HBS1L complex, a complex that recognizes stalled ribosomes and triggers the No-Go Decay (NGD) pathway. In the Pelota-HBS1L complex, PELO recognizes ribosomes stalled at the 3' end of an mRNA and engages stalled ribosomes by destabilizing mRNA in the mRNA channel. Following mRNA extraction from stalled ribosomes by the SKI complex, the Pelota-HBS1L complex promotes recruitment of ABCE1, which drives the disassembly of stalled ribosomes, followed by degradation of damaged mRNAs as part of the NGD pathway. In Gallus gallus (Chicken), this protein is Protein pelota homolog (PELO).